We begin with the raw amino-acid sequence, 647 residues long: Golgi-associated RAB2B interactor protein 3 (647 aa).

A compositionally biased stretch (polar residues) spans 188-202 (IPTADTSTETKSTLV). Disordered regions lie at residues 188-220 (IPTA…TSQD), 267-296 (TAGA…GSAR), 361-384 (SKSP…QERS), and 465-573 (RDGS…GFVS). Basic and acidic residues predominate over residues 205–214 (IHGEGDRDSK). Residues 361-378 (SKSPGSGQVATGLTGTAS) show a composition bias toward polar residues. At Ser378 the chain carries Phosphoserine. Positions 478–491 (TQKEKRERRESDRK) are enriched in basic and acidic residues. The span at 492-501 (GSRKSSHHQR) shows a compositional bias: basic residues. The Bipartite nuclear localization signal signature appears at 494–511 (RKSSHHQRTGASRHSSSK). Over residues 528 to 556 (KTREDKKEKGRGSLRDQRHSSSYRSESRT) the composition is skewed to basic and acidic residues. Residues Ser634 and Ser636 each carry the phosphoserine modification.

This sequence belongs to the GARIN family. As to quaternary structure, interacts (via N-terminus) with RAB2B (in GTP-bound form). Interacts with FRG1.

The protein localises to the golgi apparatus. It is found in the nucleus. It localises to the cajal body. Functionally, may be involved in RNA biogenesis. This Rattus norvegicus (Rat) protein is Golgi-associated RAB2B interactor protein 3 (Garin3).